The primary structure comprises 266 residues: Signal peptidase I (266 aa).

Topologically, residues 1-20 (MQTDNTKSNTNKTAKQEWGS) are cytoplasmic. A helical membrane pass occupies residues 21 to 41 (FAFVICIALLIRILIMEPFNV). Over 42–266 (PTGSMKATIL…IFRNLYNTDA (225 aa)) the chain is Extracellular. Residues Ser-45 and Lys-108 contribute to the active site.

This sequence belongs to the peptidase S26 family.

The protein localises to the cell membrane. The catalysed reaction is Cleavage of hydrophobic, N-terminal signal or leader sequences from secreted and periplasmic proteins.. This is Signal peptidase I (lepB) from Rickettsia conorii (strain ATCC VR-613 / Malish 7).